The following is a 223-amino-acid chain: Small ribosomal subunit protein uS11m (223 aa).

Residues 1-38 constitute a mitochondrion transit peptide; sequence MVLKHSVTYNLSFFISFTFSSIFFSSLILFLVYKSVLS.

Belongs to the universal ribosomal protein uS11 family. In terms of assembly, component of the mitochondrial small ribosomal subunit (mt-SSU). Mature yeast 74S mitochondrial ribosomes consist of a small (37S) and a large (54S) subunit. The 37S small subunit contains a 15S ribosomal RNA (15S mt-rRNA) and at least 32 different proteins. The 54S large subunit contains a 21S rRNA (21S mt-rRNA) and at least 45 different proteins.

Its subcellular location is the mitochondrion. Its function is as follows. Component of the mitochondrial ribosome (mitoribosome), a dedicated translation machinery responsible for the synthesis of mitochondrial genome-encoded proteins, including at least some of the essential transmembrane subunits of the mitochondrial respiratory chain. The mitoribosomes are attached to the mitochondrial inner membrane and translation products are cotranslationally integrated into the membrane. The sequence is that of Small ribosomal subunit protein uS11m (mrps18) from Schizosaccharomyces pombe (strain 972 / ATCC 24843) (Fission yeast).